The sequence spans 316 residues: MQITRPHNFETFIGQKNLISTLKAMIESSKKQNKVLNHILFYGMPGMGKTSLAGIIANETKNKIHFIQGSNLEKKSDLINILSVINENDIVFIDEIHSINKNIIEFLYSAMEDFVFDLIIGTESNAKALRMKIKPFTLIGATTKINEMAQPFKDRFGYIARFVSYNAEDMKQIIRNSIKLLNINLGEEHFDFVASYSRNTPRIVNHLLERINDFAIVKNAGIIDKKIIKKTFKSLDLYEYGLTKDHVEYLQLLRDGFDSKPVSLDTLSGVLIHPKEVLVNEIEPILLYLKLITKTSKGRMISSKGITYLLKEKLIW.

Residues 1–165 (MQITRPHNFE…FGYIARFVSY (165 aa)) form a large ATPase domain (RuvB-L) region. ATP-binding positions include Arg-5, Gly-46, Lys-49, Thr-50, Ser-51, 112–114 (EDF), Arg-155, Tyr-165, and Arg-202. Thr-50 contacts Mg(2+). The small ATPAse domain (RuvB-S) stretch occupies residues 166 to 236 (NAEDMKQIIR…IIKKTFKSLD (71 aa)). Residues 239 to 316 (EYGLTKDHVE…TYLLKEKLIW (78 aa)) form a head domain (RuvB-H) region. Residues Lys-294 and Arg-299 each contribute to the DNA site.

The protein belongs to the RuvB family. Homohexamer. Forms an RuvA(8)-RuvB(12)-Holliday junction (HJ) complex. HJ DNA is sandwiched between 2 RuvA tetramers; dsDNA enters through RuvA and exits via RuvB. An RuvB hexamer assembles on each DNA strand where it exits the tetramer. Each RuvB hexamer is contacted by two RuvA subunits (via domain III) on 2 adjacent RuvB subunits; this complex drives branch migration. In the full resolvosome a probable DNA-RuvA(4)-RuvB(12)-RuvC(2) complex forms which resolves the HJ.

The protein localises to the cytoplasm. The catalysed reaction is ATP + H2O = ADP + phosphate + H(+). Its function is as follows. The RuvA-RuvB-RuvC complex processes Holliday junction (HJ) DNA during genetic recombination and DNA repair, while the RuvA-RuvB complex plays an important role in the rescue of blocked DNA replication forks via replication fork reversal (RFR). RuvA specifically binds to HJ cruciform DNA, conferring on it an open structure. The RuvB hexamer acts as an ATP-dependent pump, pulling dsDNA into and through the RuvAB complex. RuvB forms 2 homohexamers on either side of HJ DNA bound by 1 or 2 RuvA tetramers; 4 subunits per hexamer contact DNA at a time. Coordinated motions by a converter formed by DNA-disengaged RuvB subunits stimulates ATP hydrolysis and nucleotide exchange. Immobilization of the converter enables RuvB to convert the ATP-contained energy into a lever motion, pulling 2 nucleotides of DNA out of the RuvA tetramer per ATP hydrolyzed, thus driving DNA branch migration. The RuvB motors rotate together with the DNA substrate, which together with the progressing nucleotide cycle form the mechanistic basis for DNA recombination by continuous HJ branch migration. Branch migration allows RuvC to scan DNA until it finds its consensus sequence, where it cleaves and resolves cruciform DNA. The protein is Holliday junction branch migration complex subunit RuvB of Mycoplasmopsis synoviae (strain 53) (Mycoplasma synoviae).